A 291-amino-acid polypeptide reads, in one-letter code: Farnesyl diphosphate synthase (291 aa).

Isopentenyl diphosphate contacts are provided by Lys-44, Arg-47, and His-76. Asp-83 and Asp-89 together coordinate Mg(2+). Position 94 (Arg-94) interacts with (2E)-geranyl diphosphate. Residue Arg-95 coordinates isopentenyl diphosphate. Residues Lys-177, Thr-178, Gln-215, and Lys-232 each coordinate (2E)-geranyl diphosphate.

This sequence belongs to the FPP/GGPP synthase family. Mg(2+) serves as cofactor.

Its subcellular location is the cytoplasm. It catalyses the reaction isopentenyl diphosphate + (2E)-geranyl diphosphate = (2E,6E)-farnesyl diphosphate + diphosphate. This chain is Farnesyl diphosphate synthase (fps), found in Micrococcus luteus (Micrococcus lysodeikticus).